The sequence spans 1377 residues: Endoribonuclease Dicer homolog 2b (1377 aa).

The segment covering methionine 1–glycine 15 has biased composition (gly residues). Residues methionine 1 to proline 30 form a disordered region. The 182-residue stretch at alanine 41–isoleucine 222 folds into the Helicase ATP-binding domain. ATP is bound at residue leucine 54 to threonine 61. The short motif at aspartate 163 to histidine 166 is the DECH box element. The region spanning threonine 388 to proline 561 is the Helicase C-terminal domain. Residues serine 534–glutamate 626 enclose the Dicer dsRNA-binding fold domain. Positions arginine 798 to methionine 913 constitute a PAZ domain. 2 RNase III domains span residues serine 940–glycine 1095 and valine 1132–lysine 1276. Positions 1171, 1262, and 1265 each coordinate Mg(2+). In terms of domain architecture, DRBM spans aspartate 1302–alanine 1367.

Belongs to the helicase family. Dicer subfamily. In terms of assembly, may interact with ARGONAUTE1 or PINHEAD through their common PAZ domains. The cofactor is Mg(2+). Mn(2+) is required as a cofactor.

The protein localises to the nucleus. In terms of biological role, probably involved in the RNA silencing pathway. May cleave double-stranded RNA to produce short 21-24 nucleotides (nt) RNAs which target the selective destruction of complementary RNAs. This chain is Endoribonuclease Dicer homolog 2b (DCL2B), found in Oryza sativa subsp. japonica (Rice).